We begin with the raw amino-acid sequence, 445 residues long: UPF0210 protein SMU_73 (445 aa).

The protein belongs to the UPF0210 family. In terms of assembly, homodimer.

In Streptococcus mutans serotype c (strain ATCC 700610 / UA159), this protein is UPF0210 protein SMU_73.